The following is a 322-amino-acid chain: HPr kinase/phosphorylase (322 aa).

Residues histidine 143 and lysine 164 contribute to the active site. ATP is bound at residue 158 to 165 (GRSGVGKS). Mg(2+) is bound at residue serine 165. Aspartate 182 acts as the Proton acceptor; for phosphorylation activity. Proton donor; for dephosphorylation activity in catalysis. The tract at residues 206–215 (MEIRGLGILN) is important for the catalytic mechanism of both phosphorylation and dephosphorylation. Residue glutamate 207 coordinates Mg(2+). Residue arginine 250 is part of the active site. The segment at 271–276 (PVKPGR) is important for the catalytic mechanism of dephosphorylation.

The protein belongs to the HPrK/P family. Homohexamer. Mg(2+) is required as a cofactor.

It carries out the reaction [HPr protein]-L-serine + ATP = [HPr protein]-O-phospho-L-serine + ADP + H(+). The catalysed reaction is [HPr protein]-O-phospho-L-serine + phosphate + H(+) = [HPr protein]-L-serine + diphosphate. Its function is as follows. Catalyzes the ATP- as well as the pyrophosphate-dependent phosphorylation of a specific serine residue in HPr, a phosphocarrier protein of the phosphoenolpyruvate-dependent sugar phosphotransferase system (PTS). HprK/P also catalyzes the pyrophosphate-producing, inorganic phosphate-dependent dephosphorylation (phosphorolysis) of seryl-phosphorylated HPr (P-Ser-HPr). The sequence is that of HPr kinase/phosphorylase from Leptospira biflexa serovar Patoc (strain Patoc 1 / Ames).